A 525-amino-acid chain; its full sequence is ALBINO3-like protein 2, chloroplastic (525 aa).

A run of 4 helical transmembrane segments spans residues Trp99–Leu119, Leu167–Ile187, Phe217–Phe237, and Ile262–Trp282. TPR repeat units follow at residues Pro346–Tyr379, Val380–Glu413, Met425–Gly458, and Phe467–Tyr500.

Belongs to the OXA1/ALB3/YidC (TC 2.A.9.2) family.

Its subcellular location is the plastid. The protein resides in the chloroplast thylakoid membrane. Its function is as follows. Probably required for the insertion of integral membrane proteins into the chloroplast thylakoid membranes. The protein is ALBINO3-like protein 2, chloroplastic (ALB3L2) of Arabidopsis thaliana (Mouse-ear cress).